The sequence spans 230 residues: MKKKKALPSLLYLVFIVLLPWGVSSSFNKCLELWIKNWWNTRQSETLLTDIQEKRILERFIELEELSLLDEMIKGKLKTHVQKPPTGIHKEIIQWVKINNEDHLHTILHFSTNIICLAILSGSFFLGKEELVILNSWVQEFFYNLNDSIKAFFILLVTDFFVGFHSTRGWELVIRWVYNDFGWAPNELIFTIFVCSFPVILDTCLKFWVFFCLNRLSPSLVVIYHSISEA.

Helical transmembrane passes span 7 to 27 (LPSL…SSSF), 107 to 127 (ILHF…FFLG), 145 to 165 (LNDS…VGFH), and 181 to 201 (FGWA…PVIL).

Belongs to the CemA family.

The protein resides in the plastid. Its subcellular location is the chloroplast inner membrane. The catalysed reaction is K(+)(in) + H(+)(out) = K(+)(out) + H(+)(in). Functionally, contributes to K(+)/H(+) antiport activity by supporting proton efflux to control proton extrusion and homeostasis in chloroplasts in a light-dependent manner to modulate photosynthesis. Prevents excessive induction of non-photochemical quenching (NPQ) under continuous-light conditions. Indirectly promotes efficient inorganic carbon uptake into chloroplasts. This is Potassium/proton antiporter CemA from Triticum aestivum (Wheat).